The following is a 163-amino-acid chain: Peptide methionine sulfoxide reductase MsrA 1 (163 aa).

C21 is a catalytic residue.

This sequence belongs to the MsrA Met sulfoxide reductase family.

The enzyme catalyses L-methionyl-[protein] + [thioredoxin]-disulfide + H2O = L-methionyl-(S)-S-oxide-[protein] + [thioredoxin]-dithiol. The catalysed reaction is [thioredoxin]-disulfide + L-methionine + H2O = L-methionine (S)-S-oxide + [thioredoxin]-dithiol. In terms of biological role, has an important function as a repair enzyme for proteins that have been inactivated by oxidation. Catalyzes the reversible oxidation-reduction of methionine sulfoxide in proteins to methionine. This is Peptide methionine sulfoxide reductase MsrA 1 (msrA1) from Nostoc sp. (strain PCC 7120 / SAG 25.82 / UTEX 2576).